The following is a 754-amino-acid chain: 5-methyltetrahydropteroyltriglutamate--homocysteine methyltransferase (754 aa).

5-methyltetrahydropteroyltri-L-glutamate contacts are provided by residues 17–20 and lysine 117; that span reads RELK. L-homocysteine contacts are provided by residues 431-433 and glutamate 484; that span reads IGS. L-methionine is bound by residues 431–433 and glutamate 484; that span reads IGS. 5-methyltetrahydropteroyltri-L-glutamate-binding positions include 515–516 and tryptophan 561; that span reads RC. Aspartate 599 provides a ligand contact to L-homocysteine. Aspartate 599 contacts L-methionine. Glutamate 605 lines the 5-methyltetrahydropteroyltri-L-glutamate pocket. Zn(2+) contacts are provided by histidine 641, cysteine 643, and glutamate 665. The Proton donor role is filled by histidine 694. Cysteine 726 lines the Zn(2+) pocket.

Belongs to the vitamin-B12 independent methionine synthase family. Requires Zn(2+) as cofactor.

It catalyses the reaction 5-methyltetrahydropteroyltri-L-glutamate + L-homocysteine = tetrahydropteroyltri-L-glutamate + L-methionine. The protein operates within amino-acid biosynthesis; L-methionine biosynthesis via de novo pathway; L-methionine from L-homocysteine (MetE route): step 1/1. In terms of biological role, catalyzes the transfer of a methyl group from 5-methyltetrahydrofolate to homocysteine resulting in methionine formation. The protein is 5-methyltetrahydropteroyltriglutamate--homocysteine methyltransferase of Salmonella newport (strain SL254).